The following is a 292-amino-acid chain: GTP cyclohydrolase FolE2 (292 aa).

It belongs to the GTP cyclohydrolase IV family.

It carries out the reaction GTP + H2O = 7,8-dihydroneopterin 3'-triphosphate + formate + H(+). The protein operates within cofactor biosynthesis; 7,8-dihydroneopterin triphosphate biosynthesis; 7,8-dihydroneopterin triphosphate from GTP: step 1/1. Functionally, converts GTP to 7,8-dihydroneopterin triphosphate. This is GTP cyclohydrolase FolE2 from Macrococcus caseolyticus (strain JCSC5402) (Macrococcoides caseolyticum).